The primary structure comprises 217 residues: TPA-induced transmembrane protein (217 aa).

The segment at 1–37 is disordered; it reads MDLAQPSQPVDELELSVLERQPEENTPLNGADKVFPS. The helical transmembrane segment at 66–86 threads the bilayer; that stretch reads LWMIITSIFLGVITVIIIGLC.

As to quaternary structure, interacts with LIPH. As to expression, detected predominantly in the skin, with strongest expression in the inner root sheath of the hair follicle.

The protein resides in the endoplasmic reticulum. It localises to the cell membrane. Its function is as follows. Has a role in LIPH-mediated synthesis of 2-acyl lysophosphatidic acid (LPA). LPA is a bioactive lipid mediator involved in different biological processes, and necessary to promote hair formation and growth. The protein is TPA-induced transmembrane protein (TTMP) of Homo sapiens (Human).